We begin with the raw amino-acid sequence, 319 residues long: N-acetyllactosaminide alpha-1,3-galactosyltransferase-like 1 (319 aa).

Over 1 to 6 (MQYKKE) the chain is Cytoplasmic. A helical; Signal-anchor for type II membrane protein membrane pass occupies residues 7–26 (ALLLMLFAVLLALTQRFSYS). Residues 27 to 319 (RTKDHLQKMY…IKHIKIAWKP (293 aa)) lie on the Lumenal side of the membrane. N-linked (GlcNAc...) asparagine glycans are attached at residues Asn-89 and Asn-101. Substrate contacts are provided by residues 97-102 (FATGNF), 188-190 (AVN), and 210-213 (HAWW). Glu-278 functions as the Nucleophile in the catalytic mechanism.

Belongs to the glycosyltransferase 6 family. Mn(2+) is required as a cofactor.

Its subcellular location is the golgi apparatus. It localises to the golgi stack membrane. The enzyme catalyses a beta-D-galactosyl-(1-&gt;4)-N-acetyl-beta-D-glucosaminyl derivative + UDP-alpha-D-galactose = an alpha-D-galactosyl-(1-&gt;3)-beta-D-galactosyl-(1-&gt;4)-N-acetyl-beta-D-glucosaminyl derivative + UDP + H(+). The protein operates within protein modification; protein glycosylation. Functionally, synthesizes the galactose-alpha(1,3)-galactose group by catalyzing the transfer of a galactose residue, with an alpha-1,3 linkage, on terminal lactosaminide (Gal-beta-1,4-GlcNAc-R) disaccharide borne by a glycoprotein or a glycolipid. In Mus musculus (Mouse), this protein is N-acetyllactosaminide alpha-1,3-galactosyltransferase-like 1 (Ggta1l1).